The chain runs to 486 residues: 2-succinylbenzoate--CoA ligase (486 aa).

This sequence belongs to the ATP-dependent AMP-binding enzyme family. MenE subfamily.

The enzyme catalyses 2-succinylbenzoate + ATP + CoA = 2-succinylbenzoyl-CoA + AMP + diphosphate. Its pathway is quinol/quinone metabolism; 1,4-dihydroxy-2-naphthoate biosynthesis; 1,4-dihydroxy-2-naphthoate from chorismate: step 5/7. It participates in quinol/quinone metabolism; menaquinone biosynthesis. In terms of biological role, converts 2-succinylbenzoate (OSB) to 2-succinylbenzoyl-CoA (OSB-CoA). This chain is 2-succinylbenzoate--CoA ligase, found in Bacillus pumilus (strain SAFR-032).